A 662-amino-acid chain; its full sequence is 72 kDa type IV collagenase (662 aa).

Positions 1-29 are cleaved as a signal peptide; sequence MEALGARGALAGFLRALCVLGCLLGRATA. A propeptide spans 30 to 109 (activation peptide); the sequence is PPSPVIKFPG…PRCGNPDVAN (80 aa). Residues 100 to 107 carry the Cysteine switch motif; the sequence is PRCGNPDV. C102 serves as a coordination point for Zn(2+). The tract at residues 110–221 is collagenase-like 1; sequence YNFFPRKPKW…LWTLGEGQVV (112 aa). Residues D134 and D168 each contribute to the Ca(2+) site. The Zn(2+) site is built by H178 and D180. 2 residues coordinate Ca(2+): D185 and G186. H193 contacts Zn(2+). Residues G200, G202, and D204 each contribute to the Ca(2+) site. Zn(2+) is bound at residue H206. Positions 208, 209, and 211 each coordinate Ca(2+). Positions 222-396 are collagen-binding; that stretch reads RVKYGNADGE…WGFCPDQGYS (175 aa). 3 Fibronectin type-II domains span residues 228 to 276, 286 to 334, and 344 to 392; these read ADGE…FCPH, ADGQ…FCPE, and SEGA…FCPD. 6 disulfide bridges follow: C233-C259, C247-C274, C291-C317, C305-C332, C349-C375, and C363-C390. The segment at 397-467 is collagenase-like 2; the sequence is LFLVAAHEFG…GPTPTLGPVT (71 aa). H403 is a Zn(2+) binding site. The active site involves E404. Zn(2+) contacts are provided by H407 and H413. Residues 414–662 form a required for inhibitor TIMP2 binding region; sequence SQDPGALMAP…GSIKTDWLGC (249 aa). C471 and C662 are disulfide-bonded. Hemopexin repeat units follow at residues 474-518, 519-565, 567-615, and 616-662; these read DIVF…WPEL, PEKI…GLPP, VQRV…WNAI, and PDHL…WLGC. Residues D478, D523, and D571 each contribute to the Ca(2+) site. Residue N575 is glycosylated (N-linked (GlcNAc...) asparagine). Residue D620 participates in Ca(2+) binding. N-linked (GlcNAc...) asparagine glycosylation occurs at N644.

The protein belongs to the peptidase M10A family. In terms of assembly, interacts (via the C-terminal hemopexin-like domains-containing region) with the integrin alpha-V/beta-3; the interaction promotes vascular invasion in angiogenic vessels and melamoma cells. Interacts (via the C-terminal PEX domain) with TIMP2 (via the C-terminal); the interaction inhibits the degradation activity. Interacts with GSK3B. Requires Ca(2+) as cofactor. Zn(2+) serves as cofactor. In terms of processing, phosphorylation on multiple sites modulates enzymatic activity. Phosphorylated by PKC in vitro. The propeptide is processed by MMP14 (MT-MMP1) and MMP16 (MT-MMP3). Autocatalytic cleavage in the C-terminal produces the anti-angiogenic peptide, PEX. This processing appears to be facilitated by binding integrinv/beta3.

It localises to the secreted. It is found in the extracellular space. The protein resides in the extracellular matrix. The protein localises to the membrane. Its subcellular location is the nucleus. It carries out the reaction Cleavage of gelatin type I and collagen types IV, V, VII, X. Cleaves the collagen-like sequence Pro-Gln-Gly-|-Ile-Ala-Gly-Gln.. Functionally, ubiquitinous metalloproteinase that is involved in diverse functions such as remodeling of the vasculature, angiogenesis, tissue repair, tumor invasion, inflammation, and atherosclerotic plaque rupture. As well as degrading extracellular matrix proteins, can also act on several nonmatrix proteins such as big endothelial 1 and beta-type CGRP promoting vasoconstriction. Also cleaves KISS at a Gly-|-Leu bond. Appears to have a role in myocardial cell death pathways. Contributes to myocardial oxidative stress by regulating the activity of GSK3beta. Cleaves GSK3beta in vitro. Involved in the formation of the fibrovascular tissues. Its function is as follows. PEX, the C-terminal non-catalytic fragment of MMP2, possesses anti-angiogenic and anti-tumor properties and inhibits cell migration and cell adhesion to FGF2 and vitronectin. Ligand for integrin alpha-v/beta-3 on the surface of blood vessels. In Oryctolagus cuniculus (Rabbit), this protein is 72 kDa type IV collagenase (MMP2).